Consider the following 1133-residue polypeptide: ATP-dependent DNA helicase homolog MER3 (1133 aa).

The region spanning 34-229 (PLCFHSDINM…WLKVPTAGIK (196 aa)) is the Helicase ATP-binding domain. 47–54 (APTGSGKT) provides a ligand contact to ATP. The DEVH box motif lies at 165 to 168 (DEVH). Positions 263-460 (YIYDILMQYS…CLIEHLTAEI (198 aa)) constitute a Helicase C-terminal domain. The SEC63 domain maps to 536-847 (EPGRLMTKYY…FEEYIGIDLH (312 aa)). A disordered region spans residues 878-919 (ACIADDDNPVTSGPSNRKDKKDDMPSFKLIDDDSEEEKEPYV). Over residues 893-908 (NRKDKKDDMPSFKLID) the composition is skewed to basic and acidic residues. Positions 909–919 (DDSEEEKEPYV) are enriched in acidic residues.

The protein belongs to the helicase family. SKI2 subfamily. As to expression, expressed in meiocytes during meiosis.

The protein resides in the nucleus. The catalysed reaction is Couples ATP hydrolysis with the unwinding of duplex DNA by translocating in the 3'-5' direction.. The enzyme catalyses ATP + H2O = ADP + phosphate + H(+). Functionally, DNA helicase required for crossover formation, complete synapsis of homologous chromosomes and bivalent formation during meiosis. Is specific to recombination events resulting in interference-sensitive crossovers (class I meiotic crossover). The protein is ATP-dependent DNA helicase homolog MER3 of Arabidopsis thaliana (Mouse-ear cress).